Reading from the N-terminus, the 76-residue chain is MPLRLCQGRKDRASDPVRDDGSPPRLFVSQVCRRAPKDPQGFQGHRGGQNVGDCSPIFHQEKKQVMRRFYSLCEWK.

Residues 1–24 (MPLRLCQGRKDRASDPVRDDGSPP) are disordered. Over residues 8 to 22 (GRKDRASDPVRDDGS) the composition is skewed to basic and acidic residues.

This is an uncharacterized protein from Dryophytes versicolor (chameleon treefrog).